The primary structure comprises 483 residues: Nucleolar protein 4 (483 aa).

2 disordered regions span residues glutamine 210–serine 418 and serine 435–isoleucine 483. Residues glutamine 211–methionine 225 are compositionally biased toward acidic residues. Polar residues-rich tracts occupy residues threonine 229 to glycine 254, alanine 262 to leucine 271, and glutamine 302 to serine 317. Basic and acidic residues-rich tracts occupy residues phenylalanine 319–asparagine 330 and leucine 340–glycine 350. Over residues serine 351 to serine 363 the composition is skewed to polar residues. 3 stretches are compositionally biased toward basic and acidic residues: residues glycine 364–glutamate 374, histidine 391–lysine 409, and serine 435–aspartate 451. Polar residues predominate over residues alanine 467 to isoleucine 483.

The protein resides in the nucleus. Its subcellular location is the nucleolus. The protein is Nucleolar protein 4 (Nol4) of Mus musculus (Mouse).